A 212-amino-acid chain; its full sequence is MNLLIMGLPGAGKGTQAAKIVEQFHVAHISTGDMFRAAMANQTEMGVLAKSYIDKGELVPDEVTNGIVKERLSQDDIKETGFLLDGYPRTIEQAHALDKTLAELGIELEGIINIEVNPDSLLERLSGRIIHRVTGETFHKVFNPPVDYKEEDYYQREDDKPETVKRRLDVNIAQGEPIIAHYRAKGLVHDIEGNQDINDVFSDIEKVLTNLK.

10 to 15 (GAGKGT) serves as a coordination point for ATP. An NMP region spans residues 30 to 59 (STGDMFRAAMANQTEMGVLAKSYIDKGELV). Residues T31, R36, 57–59 (ELV), 86–89 (GYPR), and Q93 contribute to the AMP site. The segment at 127–159 (GRIIHRVTGETFHKVFNPPVDYKEEDYYQREDD) is LID. Residues R128 and 137–138 (TF) each bind ATP. Residues R156 and R167 each coordinate AMP. ATP is bound at residue Q195.

The protein belongs to the adenylate kinase family. In terms of assembly, monomer.

The protein localises to the cytoplasm. The enzyme catalyses AMP + ATP = 2 ADP. It functions in the pathway purine metabolism; AMP biosynthesis via salvage pathway; AMP from ADP: step 1/1. Functionally, catalyzes the reversible transfer of the terminal phosphate group between ATP and AMP. Plays an important role in cellular energy homeostasis and in adenine nucleotide metabolism. The chain is Adenylate kinase from Streptococcus pneumoniae (strain JJA).